The following is a 1157-amino-acid chain: Peroxisomal ATPase PEX1 (1157 aa).

Disordered regions lie at residues 187 to 221 (SISS…NNGE) and 1135 to 1157 (SGRD…STLM). Over residues 205 to 217 (SSTSTATGRRSVT) the composition is skewed to low complexity.

The protein belongs to the AAA ATPase family. Interacts with PEX6; forming the PEX1-PEX6 AAA ATPase complex, which is composed of a heterohexamer formed by a trimer of PEX1-PEX6 dimers.

It localises to the membrane. The enzyme catalyses ATP + H2O = ADP + phosphate + H(+). Its function is as follows. Component of the PEX1-PEX6 AAA ATPase complex involved in peroxisome biosynthesis. The complex acts as a protein dislocase complex that mediates the ATP-dependent extraction of the PEX5 receptor from peroxisomal membranes, an essential step for PEX5 recycling. Specifically recognizes PEX5 monoubiquitinated at 'Cys-6', and pulls it out of the peroxisome lumen through the PEX2-PEX10-PEX12 retrotranslocation channel. Extraction by the PEX1-PEX6 AAA ATPase complex is accompanied by unfolding of the TPR repeats and release of bound cargo from PEX5. This chain is Peroxisomal ATPase PEX1, found in Komagataella pastoris (Yeast).